The primary structure comprises 244 residues: Phosphoadenosine 5'-phosphosulfate reductase (244 aa).

C239 serves as the catalytic Nucleophile; cysteine thiosulfonate intermediate.

It belongs to the PAPS reductase family. CysH subfamily.

It localises to the cytoplasm. It catalyses the reaction [thioredoxin]-disulfide + sulfite + adenosine 3',5'-bisphosphate + 2 H(+) = [thioredoxin]-dithiol + 3'-phosphoadenylyl sulfate. Its pathway is sulfur metabolism; hydrogen sulfide biosynthesis; sulfite from sulfate: step 3/3. In terms of biological role, catalyzes the formation of sulfite from phosphoadenosine 5'-phosphosulfate (PAPS) using thioredoxin as an electron donor. This is Phosphoadenosine 5'-phosphosulfate reductase from Klebsiella pneumoniae (strain 342).